The sequence spans 262 residues: GTP cyclohydrolase 1 type 2 homolog (262 aa).

His-65, Asp-102, His-222, and Glu-225 together coordinate a divalent metal cation.

This sequence belongs to the GTP cyclohydrolase I type 2/NIF3 family. In terms of assembly, homohexamer.

In Streptococcus pyogenes serotype M6 (strain ATCC BAA-946 / MGAS10394), this protein is GTP cyclohydrolase 1 type 2 homolog.